The sequence spans 143 residues: Dehydrin DHN2 (143 aa).

Polar residues predominate over residues 1–10; the sequence is MEYQGQTGHA. The tract at residues 1-143 is disordered; sequence MEYQGQTGHA…IKEKLPGGQH (143 aa). Residues 24-34 are compositionally biased toward gly residues; that stretch reads GHGGATGGPTG. A compositionally biased stretch (low complexity) spans 35–46; sequence THGAAAAAAGTG. The segment covering 51 to 61 has biased composition (basic and acidic residues); sequence TRDDHKTDGVL. Residues 62–71 are compositionally biased toward low complexity; the sequence is RRSGSSSSSS. A compositionally biased stretch (basic and acidic residues) spans 86 to 101; that stretch reads KEKIKEKLPGGAHKDA. Positions 109–123 are enriched in low complexity; that stretch reads AAGEYAGTGTHGAEA. Basic and acidic residues predominate over residues 124–143; the sequence is TGEKKGVMDKIKEKLPGGQH.

It belongs to the plant dehydrin family.

This chain is Dehydrin DHN2 (DHN2), found in Hordeum vulgare (Barley).